The primary structure comprises 848 residues: Probable serine/threonine-protein kinase DDB_G0278535 (848 aa).

Low complexity-rich tracts occupy residues 1–52 (MNKS…NNNH), 60–85 (TAATTTTSTTGTGTTAATTSTSTSST), and 95–116 (TSNSNLATATNTPSSSPQVSTS). Residues 1–117 (MNKSSSASTV…SSSPQVSTSV (117 aa)) are disordered. ANK repeat units follow at residues 181 to 212 (MDQTPLCAALRNGSHDIVREILFFYQSNKMDI), 218 to 248 (SGYTPLHVAASHCDDQILMLLLNYEGINVNI), 252 to 285 (DKNSALHYFCQKFRSPNCQEPFSIFLKKGVNVNA), 289 to 320 (NGETPLHKSIFNNTVRLLMVNMLLDAGAEVNV), and 324 to 353 (RGESPLHFAVRLGREDLVSVLVKAGADITI). The SAM domain maps to 378 to 441 (KNVQDIFNWL…IRNCRILRDQ (64 aa)). Positions 448-478 (NSNVTTGSGSSGSTTTTTTTTTTTSGCGGLN) are disordered. Over residues 452–472 (TTGSGSSGSTTTTTTTTTTTS) the composition is skewed to low complexity. One can recognise a Protein kinase domain in the interval 529-799 (LEYTLKLGSG…TLNRLRHEYM (271 aa)). Residues 535–543 (LGSGSSGKV) and lysine 556 each bind ATP. The active-site Proton acceptor is aspartate 650. The disordered stretch occupies residues 810 to 848 (RKLPSLSPPPQPTTTTTTTTSSSTSTNNINNNINNNNNT). Residues 822-848 (TTTTTTTTSSSTSTNNINNNINNNNNT) are compositionally biased toward low complexity.

Belongs to the protein kinase superfamily. TKL Ser/Thr protein kinase family.

The enzyme catalyses L-seryl-[protein] + ATP = O-phospho-L-seryl-[protein] + ADP + H(+). It carries out the reaction L-threonyl-[protein] + ATP = O-phospho-L-threonyl-[protein] + ADP + H(+). In Dictyostelium discoideum (Social amoeba), this protein is Probable serine/threonine-protein kinase DDB_G0278535.